The chain runs to 1004 residues: Bifunctional glutamine synthetase adenylyltransferase/adenylyl-removing enzyme (1004 aa).

Positions 1-496 (MVRPPSARSA…LHAKLFYRPL (496 aa)) are adenylyl removase. The segment at 502 to 1004 (RMDPDALRLS…RAVVERVFGS (503 aa)) is adenylyl transferase.

The protein belongs to the GlnE family. Mg(2+) is required as a cofactor.

The catalysed reaction is [glutamine synthetase]-O(4)-(5'-adenylyl)-L-tyrosine + phosphate = [glutamine synthetase]-L-tyrosine + ADP. It carries out the reaction [glutamine synthetase]-L-tyrosine + ATP = [glutamine synthetase]-O(4)-(5'-adenylyl)-L-tyrosine + diphosphate. Functionally, involved in the regulation of glutamine synthetase GlnA, a key enzyme in the process to assimilate ammonia. When cellular nitrogen levels are high, the C-terminal adenylyl transferase (AT) inactivates GlnA by covalent transfer of an adenylyl group from ATP to specific tyrosine residue of GlnA, thus reducing its activity. Conversely, when nitrogen levels are low, the N-terminal adenylyl removase (AR) activates GlnA by removing the adenylyl group by phosphorolysis, increasing its activity. The regulatory region of GlnE binds the signal transduction protein PII (GlnB) which indicates the nitrogen status of the cell. In Nocardia farcinica (strain IFM 10152), this protein is Bifunctional glutamine synthetase adenylyltransferase/adenylyl-removing enzyme.